A 494-amino-acid polypeptide reads, in one-letter code: NADH-quinone oxidoreductase subunit N (494 aa).

The next 14 helical transmembrane spans lie at 13-33 (LIAL…MLAI), 43-63 (FVLT…AMGV), 82-102 (MALV…YLGG), 117-137 (LLIL…HLVG), 138-158 (LFIG…YAFF), 169-189 (YMVL…LLYA), 209-229 (LLVE…LSLV), 243-263 (PAPV…AVLL), 277-297 (LNEL…LLAL), 311-331 (IAHF…AVEA), 332-352 (IGVY…VITL), 380-400 (AVLT…GFIG), 412-432 (QLWW…FYYL), and 461-481 (IMLL…QPLL).

This sequence belongs to the complex I subunit 2 family. As to quaternary structure, NDH-1 is composed of 13 different subunits. Subunits NuoA, H, J, K, L, M, N constitute the membrane sector of the complex.

It localises to the cell inner membrane. The enzyme catalyses a quinone + NADH + 5 H(+)(in) = a quinol + NAD(+) + 4 H(+)(out). In terms of biological role, NDH-1 shuttles electrons from NADH, via FMN and iron-sulfur (Fe-S) centers, to quinones in the respiratory chain. The immediate electron acceptor for the enzyme in this species is believed to be ubiquinone. Couples the redox reaction to proton translocation (for every two electrons transferred, four hydrogen ions are translocated across the cytoplasmic membrane), and thus conserves the redox energy in a proton gradient. The sequence is that of NADH-quinone oxidoreductase subunit N from Ectopseudomonas mendocina (strain ymp) (Pseudomonas mendocina).